Here is a 794-residue protein sequence, read N- to C-terminus: Signal transducer and activator of transcription 5A (794 aa).

At tyrosine 90 the chain carries Phosphotyrosine. Serine 128 and serine 193 each carry phosphoserine. The 98-residue stretch at 589-686 folds into the SH2 domain; that stretch reads WNDGAILGFV…EVFSKYYTPV (98 aa). Tyrosine 682 bears the Phosphotyrosine mark. Tyrosine 694 carries the post-translational modification Phosphotyrosine; by JAK2. The disordered stretch occupies residues 773–794; it reads DSLDSRLSPPAGLFTSARGSLS. The residue at position 780 (serine 780) is a Phosphoserine.

It belongs to the transcription factor STAT family. As to quaternary structure, forms a homodimer or a heterodimer with a related family member. Binds NR3C1. Interacts with NCOA1 and SOCS7. Interacts with ERBB4. Interacts with EBF4. Interacts with CD69. Tyrosine phosphorylated in response to KITLG/SCF, IL2, IL3, IL7, IL15, CSF2/GMCSF, GH1, PRL, EPO and THPO. Activated KIT promotes phosphorylation on tyrosine residues and subsequent translocation to the nucleus. Tyrosine phosphorylated in response to constitutively activated FGFR1, FGFR2, FGFR3 and FGFR4. Tyrosine phosphorylation is required for DNA-binding activity and dimerization. Serine phosphorylation is also required for maximal transcriptional activity. Tyrosine phosphorylated in response to signaling via activated FLT3; wild-type FLT3 results in much weaker phosphorylation than constitutively activated mutant FLT3. Alternatively, can be phosphorylated by JAK2 at Tyr-694. Post-translationally, ISGylated.

Its subcellular location is the cytoplasm. It is found in the nucleus. Functionally, carries out a dual function: signal transduction and activation of transcription. Mediates cellular responses to the cytokine KITLG/SCF and other growth factors. Mediates cellular responses to ERBB4. May mediate cellular responses to activated FGFR1, FGFR2, FGFR3 and FGFR4. Binds to the GAS element and activates PRL-induced transcription. Regulates the expression of milk proteins during lactation. This chain is Signal transducer and activator of transcription 5A (STAT5A), found in Homo sapiens (Human).